Consider the following 531-residue polypeptide: Protein SHORT-ROOT (531 aa).

Residues 14–39 (QQSDSIITNQSSLSRTSTTTTGSPQT) show a composition bias toward low complexity. Disordered regions lie at residues 14–40 (QQSDSIITNQSSLSRTSTTTTGSPQTA) and 65–103 (SSSSSHHNHHNHNNPNTYYSPFTTPTQYHPATSSTPSST). Over residues 81–93 (TYYSPFTTPTQYH) the composition is skewed to polar residues. The span at 94-103 (PATSSTPSST) shows a compositional bias: low complexity. In terms of domain architecture, GRAS spans 134 to 529 (FDFSANAKWA…QPVVWASAWR (396 aa)). Residues 141-206 (KWADSVLLEA…GSGERCYRTM (66 aa)) are leucine repeat I (LRI). Residues 225–290 (VLKFQEVSPW…DDTPHLRLTT (66 aa)) form a VHIID region. Positions 256-260 (IHIVD) match the VHIID motif. The leucine repeat II (LRII) stretch occupies residues 310-343 (EIGNRMEKFARLMGVPFKFNIIHHVGDLSEFDLN). The segment at 353–449 (LAINCVGAMH…ERAAGRAIVD (97 aa)) is PFYRE. The interval 452–529 (ACEPSDSTER…QPVVWASAWR (78 aa)) is SAW.

It belongs to the GRAS family. As to quaternary structure, interacts with SCR, SCL23, JKD and MGP. Interacts with SIEL. Association to endosomes and intercellular movement of SHR rely on the interaction with SIEL. As to expression, expressed in the stele and the quiescent center. Not detected in the ground tissue cell lineage. The SHR protein moves from the stele to a single layer of adjacent cells, where it enters the nucleus.

It localises to the cytoplasm. Its subcellular location is the nucleus. The protein localises to the early endosome. The protein resides in the late endosome. It is found in the recycling endosome. Transcription factor required for quiescent center cells specification and maintenance of surrounding stem cells, and for the asymmetric cell division involved in radial pattern formation in roots. Essential for both cell division and cell specification. Regulates the radial organization of the shoot axial organs and is required for normal shoot gravitropism. Directly controls the transcription of SCR, and when associated with SCR, of MGP, RLK, TRI, NUC and SCL3. The polypeptide is Protein SHORT-ROOT (Arabidopsis thaliana (Mouse-ear cress)).